A 253-amino-acid polypeptide reads, in one-letter code: uncharacterized protein (253 aa).

Residues 4–73 (FGKSTADRVK…IDVSGVTVLQ (70 aa)) enclose the BON 1 domain. The segment covering 79–93 (AAQTAPTTPAQTSPS) has biased composition (low complexity). A disordered region spans residues 79-105 (AAQTAPTTPAQTSPSVQDSPSTPVQMP). The 70-residue stretch at 119-188 (DTSRIAKAVL…VDISGLRVAQ (70 aa)) folds into the BON 2 domain. The LysM domain occupies 204 to 251 (TVYTVKPGDSLSKIAEHYYGDQMEYKKIAHYNNISNPDLIQPGQKLRI).

This is an uncharacterized protein from Deinococcus radiodurans (strain ATCC 13939 / DSM 20539 / JCM 16871 / CCUG 27074 / LMG 4051 / NBRC 15346 / NCIMB 9279 / VKM B-1422 / R1).